A 206-amino-acid polypeptide reads, in one-letter code: Thiamine-phosphate synthase (206 aa).

4-amino-2-methyl-5-(diphosphooxymethyl)pyrimidine contacts are provided by residues 36-40 and Asn68; that span reads QLRMK. Mg(2+) is bound by residues Asp69 and Asp88. A 4-amino-2-methyl-5-(diphosphooxymethyl)pyrimidine-binding site is contributed by Ser106. 132 to 134 provides a ligand contact to 2-[(2R,5Z)-2-carboxy-4-methylthiazol-5(2H)-ylidene]ethyl phosphate; the sequence is TNT. A 4-amino-2-methyl-5-(diphosphooxymethyl)pyrimidine-binding site is contributed by Lys135. 2-[(2R,5Z)-2-carboxy-4-methylthiazol-5(2H)-ylidene]ethyl phosphate is bound by residues Gly162 and 182–183; that span reads VS.

This sequence belongs to the thiamine-phosphate synthase family. Mg(2+) is required as a cofactor.

It catalyses the reaction 2-[(2R,5Z)-2-carboxy-4-methylthiazol-5(2H)-ylidene]ethyl phosphate + 4-amino-2-methyl-5-(diphosphooxymethyl)pyrimidine + 2 H(+) = thiamine phosphate + CO2 + diphosphate. It carries out the reaction 2-(2-carboxy-4-methylthiazol-5-yl)ethyl phosphate + 4-amino-2-methyl-5-(diphosphooxymethyl)pyrimidine + 2 H(+) = thiamine phosphate + CO2 + diphosphate. The enzyme catalyses 4-methyl-5-(2-phosphooxyethyl)-thiazole + 4-amino-2-methyl-5-(diphosphooxymethyl)pyrimidine + H(+) = thiamine phosphate + diphosphate. It participates in cofactor biosynthesis; thiamine diphosphate biosynthesis; thiamine phosphate from 4-amino-2-methyl-5-diphosphomethylpyrimidine and 4-methyl-5-(2-phosphoethyl)-thiazole: step 1/1. Functionally, condenses 4-methyl-5-(beta-hydroxyethyl)thiazole monophosphate (THZ-P) and 2-methyl-4-amino-5-hydroxymethyl pyrimidine pyrophosphate (HMP-PP) to form thiamine monophosphate (TMP). The sequence is that of Thiamine-phosphate synthase from Methanococcus vannielii (strain ATCC 35089 / DSM 1224 / JCM 13029 / OCM 148 / SB).